Here is a 713-residue protein sequence, read N- to C-terminus: Acetyl-coenzyme A synthetase 1 (713 aa).

Residues 1-39 form a disordered region; sequence MSPSAVQSSKLEEQSSEIDKLKAKMSQSAATAQQKKEHE. The span at 10–22 shows a compositional bias: basic and acidic residues; that stretch reads KLEEQSSEIDKLK. CoA-binding positions include 248–251 and Thr367; that span reads RGGK. ATP-binding positions include 443 to 445, 467 to 472, Asp559, and Arg574; these read GEP and DTYWQT. The FACS motif lies at 552–600; sequence PGYYFTGDGAAKDKDGYIWILGRVDDVVNVSGHRLSTAEIEAAIIEDPI. Position 582 (Ser582) interacts with CoA. ATP is bound at residue Arg585. A CoA-binding site is contributed by Arg650. A Microbody targeting signal motif is present at residues 711-713; that stretch reads VKL.

Belongs to the ATP-dependent AMP-binding enzyme family.

Its subcellular location is the microsome. It localises to the cytoplasm. The protein localises to the mitochondrion. The protein resides in the nucleus. The catalysed reaction is acetate + ATP + CoA = acetyl-CoA + AMP + diphosphate. Its function is as follows. Catalyzes the production of acetyl-CoA. Provides the acetyl-CoA source for histone acetylation in the nucleus. 'Aerobic' isozyme of acetyl-coenzyme A synthetase, which supports growth on nonfermentable carbon sources such as glycerol and ethanol. May be required for assimilation of ethanol and acetate. This chain is Acetyl-coenzyme A synthetase 1 (ACS1), found in Saccharomyces cerevisiae (strain ATCC 204508 / S288c) (Baker's yeast).